The following is a 74-amino-acid chain: U6-agatoxin-Ao1a (74 aa).

Positions 1-19 (MRFYIAFFFLLLAADMALS) are cleaved as a signal peptide. Positions 20–30 (FEIGNSEELER) are excised as a propeptide. 3 disulfides stabilise this stretch: cysteine 44-cysteine 56, cysteine 49-cysteine 61, and cysteine 55-cysteine 72.

In terms of tissue distribution, expressed by the venom gland.

The protein resides in the secreted. The polypeptide is U6-agatoxin-Ao1a (Agelena orientalis (Funnel-web spider)).